The chain runs to 224 residues: CDP-diacylglycerol--inositol 3-phosphatidyltransferase (224 aa).

Over 1–8 (MTIAEHDN) the chain is Cytoplasmic. The chain crosses the membrane as a helical span at residues 9-29 (VFIFVPNLIGYARIVLALIAF). Residues 30–35 (WFMSTN) are Lumenal-facing. The chain crosses the membrane as a helical span at residues 36-52 (YVISGWCYVTSALLDAV). Positions 50 and 53 each coordinate Mg(2+). Topologically, residues 53-76 (DGQAARAFNQSTRFGAMLDQLTDR) are cytoplasmic. Positions 54, 58, and 64 each coordinate a CDP-1,2-diacyl-sn-glycerol. Mg(2+)-binding residues include aspartate 71 and aspartate 75. The active-site Proton acceptor is the aspartate 75. A helical membrane pass occupies residues 77 to 97 (CGTTGLLVTLAYFYPRYMFWF). Position 98 (glutamine 98) is a topological domain, lumenal. A helical transmembrane segment spans residues 99-119 (LSIAIDVACHWLFMQTSVVVG). Residues 120-138 (RSSHKVNDNFIMRLYYQKD) lie on the Cytoplasmic side of the membrane. The chain crosses the membrane as a helical span at residues 139-159 (ILTFMCCVNELFYVCLYLLHF). At 160–163 (TYGP) the chain is on the lumenal side. The chain crosses the membrane as a helical span at residues 164 to 184 (LIFGASLFKILAFLTGPFAVL). Residues 185-224 (KALISVMHAYVAGIDLAAVDVRERQERRQKSEPVSGKKVE) are Cytoplasmic-facing.

It belongs to the CDP-alcohol phosphatidyltransferase class-I family. Mn(2+) serves as cofactor. Requires Mg(2+) as cofactor. In adults, expression is higher in the head than in the body (at protein level).

It is found in the apical cell membrane. The protein localises to the lateral cell membrane. The enzyme catalyses a CDP-1,2-diacyl-sn-glycerol + myo-inositol = a 1,2-diacyl-sn-glycero-3-phospho-(1D-myo-inositol) + CMP + H(+). Functionally, catalyzes the biosynthesis of phosphatidylinositol (PtdIns) as well as PtdIns:inositol exchange reaction. May thus act to reduce an excessive cellular PtdIns content. The exchange activity is due to the reverse reaction of PtdIns synthase and is dependent on CMP, which is tightly bound to the enzyme. Required for the regeneration of the signaling molecule phosphatidylinositol 4,5-bisphosphate (PtdInsP2) from phosphatidic acid (PA) and maintenance of its steady supply during signaling, thus playing an essential role during phospholipase C-mediated transduction. This function is essential in photoreceptors for light-activated recycling of PtdInsP2 during phototransduction. As a key enzyme of the phosphoinositide pathway, indirectly involved in the polarized secretion of basal membrane (BM) proteins in follicle epithelial (FE) cells through promoting PtdInsP2 synthesis in the apical and lateral plasma membranes of FE cells. PtdInsP2 controls the localization of Crag and perhaps the localization and expression of strat, both of which are essential for restricting the secretion of BM proteins to the basal surface. This is CDP-diacylglycerol--inositol 3-phosphatidyltransferase from Drosophila melanogaster (Fruit fly).